The chain runs to 1045 residues: Extracellular serine protease (1045 aa).

A signal peptide spans 1–27 (MILNKRLKLAYCVFLGCYGLSIHSSLA). Residues 49 to 397 (QWGLEAISAE…WGRVNLRDAI (349 aa)) enclose the Peptidase S8 domain. Residues Asp-76, His-112, and Ser-341 each act as charge relay system in the active site. Residues 646–1045 (SLASTENEKA…SVNAGLTWRF (400 aa)) constitute a propeptide, translocator domain; removed in mature form. Residues 769–1045 (IKADDNGAWA…SVNAGLTWRF (277 aa)) form the Autotransporter domain.

Belongs to the peptidase S8 family.

It localises to the secreted. In Serratia marcescens, this protein is Extracellular serine protease.